Reading from the N-terminus, the 195-residue chain is Dephospho-CoA kinase (195 aa).

Positions 3 to 195 (IVGLTGGIGS…IALHENYLNH (193 aa)) constitute a DPCK domain. 11 to 16 (GSGKSA) provides a ligand contact to ATP.

Belongs to the CoaE family.

It localises to the cytoplasm. The enzyme catalyses 3'-dephospho-CoA + ATP = ADP + CoA + H(+). It functions in the pathway cofactor biosynthesis; coenzyme A biosynthesis; CoA from (R)-pantothenate: step 5/5. Catalyzes the phosphorylation of the 3'-hydroxyl group of dephosphocoenzyme A to form coenzyme A. In Acinetobacter baylyi (strain ATCC 33305 / BD413 / ADP1), this protein is Dephospho-CoA kinase.